Reading from the N-terminus, the 443-residue chain is D-alanyl-D-alanine carboxypeptidase DacA (443 aa).

An N-terminal signal peptide occupies residues 1–31; the sequence is MNIKKCKQLLMSLVVLTLAVTCLAPMSKAKA. S67 acts as the Acyl-ester intermediate in catalysis. Catalysis depends on K70, which acts as the Proton acceptor. S131 is a catalytic residue. Residue K258 coordinates substrate.

It belongs to the peptidase S11 family.

It localises to the secreted. The protein resides in the cell wall. Its subcellular location is the cell membrane. The protein localises to the membrane raft. The enzyme catalyses Preferential cleavage: (Ac)2-L-Lys-D-Ala-|-D-Ala. Also transpeptidation of peptidyl-alanyl moieties that are N-acyl substituents of D-alanine.. It functions in the pathway cell wall biogenesis; peptidoglycan biosynthesis. Removes C-terminal D-alanyl residues from sugar-peptide cell wall precursors. In Bacillus subtilis (strain 168), this protein is D-alanyl-D-alanine carboxypeptidase DacA (dacA).